The primary structure comprises 314 residues: NF-kappa-B inhibitor alpha (314 aa).

A disordered region spans residues 1 to 41 (MFQPAEPGQEWAMEGPRDALKKERLLDDRHDSGLDSMKDEE). Residues 15–41 (GPRDALKKERLLDDRHDSGLDSMKDEE) are compositionally biased toward basic and acidic residues. A Glycyl lysine isopeptide (Lys-Gly) (interchain with G-Cter in SUMO); alternate cross-link involves residue Lys21. Lys21 participates in a covalent cross-link: Glycyl lysine isopeptide (Lys-Gly) (interchain with G-Cter in ubiquitin); alternate. Lys22 is covalently cross-linked (Glycyl lysine isopeptide (Lys-Gly) (interchain with G-Cter in ubiquitin)). A Destruction motif motif is present at residues 30–36 (HDSGLDS). Ser32 is subject to Phosphoserine; by IKKA and IKKB. A Phosphoserine; by IKKA, IKKB, IKKE and TBK1 modification is found at Ser36. Tyr42 is modified (phosphotyrosine; by Tyr-kinases). The short motif at 45-54 (MVKELREIRL) is the Nuclear export signal element. The Nuclear import signal motif lies at 110-120 (LQQTPLHLAVI). ANK repeat units follow at residues 110-139 (LQQTPLHLAVITNQPEIAEALLEAGCDPEL), 143-172 (RGNTPLHLACEQGCLASVGVLTQPRGTQHL), 182-211 (NGHTCLHLASIHGYLGIVELLVSLGADVNA), and 216-245 (NGRTALHLAVDLQNPDLVSLLLKCGADVNR). Residues Asn210 and Asn244 each carry the (3S)-3-hydroxyasparagine; by HIF1AN modification. Phosphoserine; by CK2 occurs at positions 283 and 288. A Phosphothreonine; by CK2 modification is found at Thr291. Residue Ser293 is modified to Phosphoserine; by CK2. A Phosphothreonine modification is found at Thr296.

Belongs to the NF-kappa-B inhibitor family. As to quaternary structure, interacts with RELA; the interaction requires the nuclear import signal. Part of a 70-90 kDa complex at least consisting of CHUK, IKBKB, NFKBIA, RELA, ELP1 and MAP3K14. Interacts with NKIRAS1 and NKIRAS2. Interacts with RWDD3; the interaction enhances sumoylation. Interacts with PRMT2. Interacts with PRKACA in platelets; this interaction is disrupted by thrombin and collagen. Interacts with MEFV. Interacts with DDRGK1; positively regulates NFKBIA phosphorylation and degradation. Interacts with HNRNPA2B1; the interaction may be mediated by the RRM2 domain of HNRNPA2B1, and HNRNPA2B1 may interact simultaneously with FAM76B and either NFKBIA or NFKBIE to form a complex. Post-translationally, phosphorylated at Ser-32 and Ser-36 by IKKA/CHUK and IKKB/IKBKB; disables inhibition of NF-kappa-B DNA-binding activity. Phosphorylation at positions 32 and 36 is prerequisite to recognition by the SCF(FBXW11) and SCF(BTRC) complexes, leading to polyubiquitination and subsequent degradation. Polyubiquitinated at Lys-21 and/or Lys-22 following phosphorylation at Ser-32 and Ser-36. Monoubiquitinated at Lys-21 and/or Lys-22 by UBE2D3. Ubiquitin chain elongation is then performed by CDC34 in cooperation with the SCF(FBXW11) E3 ligase complex, building ubiquitin chains from the UBE2D3-primed NFKBIA-linked ubiquitin. The resulting polyubiquitination leads to protein degradation. Also ubiquitinated by the SCF(BTRC) complex following stimulus-dependent phosphorylation at Ser-32 and Ser-36. Deubiquitinated by USP38, leading to NF-kappa-B inhibition. In terms of processing, sumoylated; sumoylation requires the presence of the nuclear import signal. Sumoylation blocks ubiquitination and proteasome-mediated degradation of the protein thereby increasing the protein stability. Post-translationally, hydroxylated by HIF1AN.

It is found in the cytoplasm. It localises to the nucleus. Functionally, inhibits the activity of dimeric NF-kappa-B/REL complexes by trapping REL (RELA/p65 and NFKB1/p50) dimers in the cytoplasm by masking their nuclear localization signals. On cellular stimulation by immune and pro-inflammatory responses, becomes phosphorylated promoting ubiquitination and degradation, enabling the dimeric RELA to translocate to the nucleus and activate transcription. This chain is NF-kappa-B inhibitor alpha (NFKBIA), found in Sus scrofa (Pig).